Reading from the N-terminus, the 1071-residue chain is Ubiquitin carboxyl-terminal hydrolase 7 (1071 aa).

Residues 467–532 (KARLQQEQQQ…MPTTPEIPPP (66 aa)) form a disordered region. A compositionally biased stretch (low complexity) spans 471–480 (QQEQQQQQQQ). Positions 481 to 495 (PDSQDSFSAKESSTK) are enriched in polar residues. Pro residues-rich tracts occupy residues 497–507 (PEPPSWKPPDL) and 516–532 (PPPP…IPPP). A USP domain is found at 609–1069 (TGLRNLGNTC…DVYVLFYERV (461 aa)). Cys-618 serves as the catalytic Nucleophile. Residues 913 to 942 (RMLGGSGKRSSSSTPFSTGGNDSNNSSDYK) are disordered. Over residues 920 to 932 (KRSSSSTPFSTGG) the composition is skewed to polar residues. His-1014 functions as the Proton acceptor in the catalytic mechanism.

Belongs to the peptidase C19 family.

It localises to the cytoplasm. It carries out the reaction Thiol-dependent hydrolysis of ester, thioester, amide, peptide and isopeptide bonds formed by the C-terminal Gly of ubiquitin (a 76-residue protein attached to proteins as an intracellular targeting signal).. Its function is as follows. Involved in the sorting of ubiquitinated cargo proteins at the multivesicular body (MVB). The polypeptide is Ubiquitin carboxyl-terminal hydrolase 7 (UBP7) (Saccharomyces cerevisiae (strain ATCC 204508 / S288c) (Baker's yeast)).